We begin with the raw amino-acid sequence, 193 residues long: Molybdopterin synthase catalytic subunit (193 aa).

Residues 118–119 (HR), K134, and 141–143 (KKE) contribute to the substrate site. A disordered region spans residues 159-193 (DRTTTDGTTASSPAPATRPAKGGGCCGSKVRANES). Positions 163-178 (TDGTTASSPAPATRPA) are enriched in low complexity.

Belongs to the MoaE family. MOCS2B subfamily. As to quaternary structure, heterotetramer; composed of 2 small (MOCS2A) and 2 large (MOCS2B) subunits.

Its subcellular location is the cytoplasm. It catalyses the reaction 2 [molybdopterin-synthase sulfur-carrier protein]-C-terminal-Gly-aminoethanethioate + cyclic pyranopterin phosphate + H2O = molybdopterin + 2 [molybdopterin-synthase sulfur-carrier protein]-C-terminal Gly-Gly + 2 H(+). It participates in cofactor biosynthesis; molybdopterin biosynthesis. Catalytic subunit of the molybdopterin synthase complex, a complex that catalyzes the conversion of precursor Z into molybdopterin. Acts by mediating the incorporation of 2 sulfur atoms from thiocarboxylated MOCS2A into precursor Z to generate a dithiolene group. The chain is Molybdopterin synthase catalytic subunit from Oryza sativa subsp. indica (Rice).